The primary structure comprises 117 residues: Ribonuclease P protein component (117 aa).

Belongs to the RnpA family. Consists of a catalytic RNA component (M1 or rnpB) and a protein subunit.

The enzyme catalyses Endonucleolytic cleavage of RNA, removing 5'-extranucleotides from tRNA precursor.. In terms of biological role, RNaseP catalyzes the removal of the 5'-leader sequence from pre-tRNA to produce the mature 5'-terminus. It can also cleave other RNA substrates such as 4.5S RNA. The protein component plays an auxiliary but essential role in vivo by binding to the 5'-leader sequence and broadening the substrate specificity of the ribozyme. This chain is Ribonuclease P protein component, found in Thermotoga petrophila (strain ATCC BAA-488 / DSM 13995 / JCM 10881 / RKU-1).